The sequence spans 322 residues: Cytochrome f (322 aa).

Residues 1 to 37 form the signal peptide; it reads MQNRKTYAYDWIKKWMIKSISTLIIINTMVWSSVSEA. Heme-binding residues include tyrosine 38, cysteine 58, cysteine 61, and histidine 62. Residues 285–307 form a helical membrane-spanning segment; that stretch reads VLRVQGLLLFFASVILAQIFLVL.

This sequence belongs to the cytochrome f family. The 4 large subunits of the cytochrome b6-f complex are cytochrome b6, subunit IV (17 kDa polypeptide, petD), cytochrome f and the Rieske protein, while the 4 small subunits are PetG, PetL, PetM and PetN. The complex functions as a dimer. It depends on heme as a cofactor.

Its subcellular location is the plastid. It localises to the chloroplast thylakoid membrane. Functionally, component of the cytochrome b6-f complex, which mediates electron transfer between photosystem II (PSII) and photosystem I (PSI), cyclic electron flow around PSI, and state transitions. In Anthoceros angustus (Hornwort), this protein is Cytochrome f (petA).